Consider the following 850-residue polypeptide: DNA polymerase I (850 aa).

Residues M1–E288 enclose the 5'-3' exonuclease domain. Positions V470 to K850 are polymerase.

It belongs to the DNA polymerase type-A family.

The catalysed reaction is DNA(n) + a 2'-deoxyribonucleoside 5'-triphosphate = DNA(n+1) + diphosphate. Its function is as follows. In addition to polymerase activity, this DNA polymerase exhibits 3'-5' and 5'-3' exonuclease activity. In Caldicellulosiruptor bescii (strain ATCC BAA-1888 / DSM 6725 / KCTC 15123 / Z-1320) (Anaerocellum thermophilum), this protein is DNA polymerase I (polA).